Reading from the N-terminus, the 451-residue chain is Probable D-serine dehydratase (451 aa).

Lys-119 bears the N6-(pyridoxal phosphate)lysine mark.

This sequence belongs to the serine/threonine dehydratase family. DsdA subfamily. Pyridoxal 5'-phosphate is required as a cofactor.

It catalyses the reaction D-serine = pyruvate + NH4(+). This chain is Probable D-serine dehydratase, found in Acidovorax ebreus (strain TPSY) (Diaphorobacter sp. (strain TPSY)).